Reading from the N-terminus, the 164-residue chain is Thiol peroxidase (164 aa).

The 146-residue stretch at 17–162 folds into the Thioredoxin domain; that stretch reads IKVGDTFPDF…YDEVLQAAQA (146 aa). Residue Cys58 is the Cysteine sulfenic acid (-SOH) intermediate of the active site. Cys58 and Cys92 form a disulfide bridge.

The protein belongs to the peroxiredoxin family. Tpx subfamily. In terms of assembly, homodimer.

It carries out the reaction a hydroperoxide + [thioredoxin]-dithiol = an alcohol + [thioredoxin]-disulfide + H2O. Functionally, thiol-specific peroxidase that catalyzes the reduction of hydrogen peroxide and organic hydroperoxides to water and alcohols, respectively. Plays a role in cell protection against oxidative stress by detoxifying peroxides. The polypeptide is Thiol peroxidase (Clostridium acetobutylicum (strain ATCC 824 / DSM 792 / JCM 1419 / IAM 19013 / LMG 5710 / NBRC 13948 / NRRL B-527 / VKM B-1787 / 2291 / W)).